A 620-amino-acid chain; its full sequence is 1-deoxy-D-xylulose-5-phosphate synthase (620 aa).

Residues histidine 80 and 121–123 (GHS) contribute to the thiamine diphosphate site. Aspartate 152 provides a ligand contact to Mg(2+). Thiamine diphosphate is bound by residues 153–154 (GA), asparagine 181, tyrosine 288, and glutamate 370. Residue asparagine 181 coordinates Mg(2+).

Belongs to the transketolase family. DXPS subfamily. In terms of assembly, homodimer. Mg(2+) is required as a cofactor. Requires thiamine diphosphate as cofactor.

The catalysed reaction is D-glyceraldehyde 3-phosphate + pyruvate + H(+) = 1-deoxy-D-xylulose 5-phosphate + CO2. The protein operates within metabolic intermediate biosynthesis; 1-deoxy-D-xylulose 5-phosphate biosynthesis; 1-deoxy-D-xylulose 5-phosphate from D-glyceraldehyde 3-phosphate and pyruvate: step 1/1. In terms of biological role, catalyzes the acyloin condensation reaction between C atoms 2 and 3 of pyruvate and glyceraldehyde 3-phosphate to yield 1-deoxy-D-xylulose-5-phosphate (DXP). In Escherichia coli (strain SMS-3-5 / SECEC), this protein is 1-deoxy-D-xylulose-5-phosphate synthase.